The following is a 590-amino-acid chain: 4-oxocyclohex-2-ene-1-carboxylate 5-dehydrogenase (590 aa).

Belongs to the FAD-dependent oxidoreductase 2 family. In terms of assembly, forms multimers. Requires FAD as cofactor.

The catalysed reaction is 4-oxocyclohex-2-ene-1-carboxylate + NAD(+) = 4-oxocyclohexa-2,5-diene-1-carboxylate + NADH + H(+). Functionally, desaturase involved in a cyclohexanecarboxylate (CHCA) degradation pathway. Probably catalyzes the conversion of 4-oxocyclohexenecarboxylate to 4-oxocyclohex-2,5-dienecarboxylate, which is spontaneously isomerized to 4-hydroxybenzoate (4-HBA). The chain is 4-oxocyclohex-2-ene-1-carboxylate 5-dehydrogenase from Sinomonas cyclohexanicum (Corynebacterium cyclohexanicum).